Here is a 188-residue protein sequence, read N- to C-terminus: dCTP deaminase (188 aa).

109–114 (KSTYAR) is a binding site for dCTP. The active-site Proton donor/acceptor is Glu-135. 3 residues coordinate dCTP: Gln-154, Tyr-168, and Gln-178.

Belongs to the dCTP deaminase family. As to quaternary structure, homotrimer.

It catalyses the reaction dCTP + H2O + H(+) = dUTP + NH4(+). It functions in the pathway pyrimidine metabolism; dUMP biosynthesis; dUMP from dCTP (dUTP route): step 1/2. Its function is as follows. Catalyzes the deamination of dCTP to dUTP. The protein is dCTP deaminase of Helicobacter pylori (strain J99 / ATCC 700824) (Campylobacter pylori J99).